The sequence spans 96 residues: SAGA-associated factor 11 (96 aa).

The SGF11-type zinc-finger motif lies at 68 to 89 (FHCKNCGRDVSANRFAAHLQRC).

Belongs to the SGF11 family. Component of the 1.8 MDa SAGA transcription coactivator-HAT complex. SAGA is built of 5 distinct domains with specialized functions. Within the SAGA complex, SUS1, SGF11, SGF73 and UBP8 form an additional subcomplex of SAGA called the DUB module (deubiquitination module). Interacts directly with SGF73, SUS1 and UBP8.

The protein localises to the nucleus. In terms of biological role, functions as a component of the transcription regulatory histone acetylation (HAT) complex SAGA. At the promoters, SAGA is required for recruitment of the basal transcription machinery. It influences RNA polymerase II transcriptional activity through different activities such as TBP interaction and promoter selectivity, interaction with transcription activators, and chromatin modification through histone acetylation and deubiquitination. SAGA acetylates nucleosomal histone H3 to some extent (to form H3K9ac, H3K14ac, H3K18ac and H3K23ac). SAGA interacts with DNA via upstream activating sequences (UASs). Involved in transcriptional regulation of a subset of SAGA-regulated genes. Within the SAGA complex, participates in a subcomplex, that specifically deubiquitinates histones H2B. This Vanderwaltozyma polyspora (strain ATCC 22028 / DSM 70294 / BCRC 21397 / CBS 2163 / NBRC 10782 / NRRL Y-8283 / UCD 57-17) (Kluyveromyces polysporus) protein is SAGA-associated factor 11.